A 213-amino-acid polypeptide reads, in one-letter code: Ribonuclease HII (213 aa).

One can recognise an RNase H type-2 domain in the interval 27–213; it reads HAVAGVDEAG…FRGVKEHVAP (187 aa). Residues Asp33, Glu34, and Asp125 each contribute to the a divalent metal cation site.

Belongs to the RNase HII family. Mn(2+) is required as a cofactor. Mg(2+) serves as cofactor.

The protein localises to the cytoplasm. It carries out the reaction Endonucleolytic cleavage to 5'-phosphomonoester.. Endonuclease that specifically degrades the RNA of RNA-DNA hybrids. This Geobacter metallireducens (strain ATCC 53774 / DSM 7210 / GS-15) protein is Ribonuclease HII.